Here is a 251-residue protein sequence, read N- to C-terminus: MQSGASETNKLKYRRVLLKLSGEALMGGGQFGIDIPTCEQFARAIAEAREAGAEICLVIGGGNIFRGVAGAAKGMERAQADSMGMLATVMNALAMQSVLENLGVPTRVQSALNMDAICEPYIRRRAHRHMEKGRVVIFAAGIGNPFFTTDTGAALRAIEMNCDALLKGTQVDGVYTADPKLDATATRYHQVAYQEILAKDLKVMDSSAVSLMRDNNIPIVVFSLKEEGSLLNVLYGRGTSTTITKEGAEKP.

ATP is bound at residue 19-22 (KLSG). Position 61 (Gly-61) interacts with UMP. 2 residues coordinate ATP: Gly-62 and Arg-66. Residues Asp-81 and 142 to 149 (IGNPFFTT) contribute to the UMP site. Thr-169, Gln-170, Tyr-175, and Asp-178 together coordinate ATP.

This sequence belongs to the UMP kinase family. In terms of assembly, homohexamer.

Its subcellular location is the cytoplasm. The catalysed reaction is UMP + ATP = UDP + ADP. It functions in the pathway pyrimidine metabolism; CTP biosynthesis via de novo pathway; UDP from UMP (UMPK route): step 1/1. Its activity is regulated as follows. Inhibited by UTP. In terms of biological role, catalyzes the reversible phosphorylation of UMP to UDP. The chain is Uridylate kinase from Hyphomonas neptunium (strain ATCC 15444).